Reading from the N-terminus, the 430-residue chain is Tol-Pal system protein TolB (430 aa).

The N-terminal stretch at 1–21 (MKQAFRVALGFLILWASVLHA) is a signal peptide.

This sequence belongs to the TolB family. In terms of assembly, the Tol-Pal system is composed of five core proteins: the inner membrane proteins TolA, TolQ and TolR, the periplasmic protein TolB and the outer membrane protein Pal. They form a network linking the inner and outer membranes and the peptidoglycan layer.

Its subcellular location is the periplasm. Functionally, part of the Tol-Pal system, which plays a role in outer membrane invagination during cell division and is important for maintaining outer membrane integrity. TolB occupies a key intermediary position in the Tol-Pal system because it communicates directly with both membrane-embedded components, Pal in the outer membrane and TolA in the inner membrane. This is Tol-Pal system protein TolB from Serratia proteamaculans (strain 568).